We begin with the raw amino-acid sequence, 456 residues long: Probable glycine dehydrogenase (decarboxylating) subunit 1 (456 aa).

It belongs to the GcvP family. N-terminal subunit subfamily. As to quaternary structure, the glycine cleavage system is composed of four proteins: P, T, L and H. In this organism, the P 'protein' is a heterodimer of two subunits.

It carries out the reaction N(6)-[(R)-lipoyl]-L-lysyl-[glycine-cleavage complex H protein] + glycine + H(+) = N(6)-[(R)-S(8)-aminomethyldihydrolipoyl]-L-lysyl-[glycine-cleavage complex H protein] + CO2. In terms of biological role, the glycine cleavage system catalyzes the degradation of glycine. The P protein binds the alpha-amino group of glycine through its pyridoxal phosphate cofactor; CO(2) is released and the remaining methylamine moiety is then transferred to the lipoamide cofactor of the H protein. The chain is Probable glycine dehydrogenase (decarboxylating) subunit 1 from Legionella pneumophila (strain Paris).